The sequence spans 347 residues: Rhodopsin (347 aa).

Topologically, residues 1–33 (TEGPDFYIPMVNTTGVVRSPYEYPQYYLVNPAA) are extracellular. An N-linked (GlcNAc...) asparagine glycan is attached at Asn-12. Residues 34–58 (YAVLGAYMFFLIIVGFPINFLTLYV) form a helical membrane-spanning segment. Over 59–70 (TLEHKKLRTPLN) the chain is Cytoplasmic. Residues 71 to 93 (YILLNLAVADLFMVIGGFTTTMY) form a helical membrane-spanning segment. The Extracellular portion of the chain corresponds to 94 to 107 (SSMHGYFVLGRLGC). Cys-107 and Cys-184 form a disulfide bridge. The chain crosses the membrane as a helical span at residues 108 to 130 (NIEGFFATLGGMISLWSLAVLAI). Residues 131–133 (ERW) carry the 'Ionic lock' involved in activated form stabilization motif. Topologically, residues 131-149 (ERWVVVCKPISNFRFGENH) are cytoplasmic. Residues 150-170 (AIMGVSLTWVMALACTVPPLV) form a helical membrane-spanning segment. Residues 171 to 199 (GWSRYIPEGMQCACGIDYYTRAEGYNNES) are Extracellular-facing. Residue Asn-197 is glycosylated (N-linked (GlcNAc...) asparagine). Residues 200 to 221 (FVIYMFTFHFLFPMFIIFFCYG) traverse the membrane as a helical segment. The Cytoplasmic segment spans residues 222–249 (RLLCAVKEAAAAQQESETTQRAEREVTR). A helical membrane pass occupies residues 250–271 (MVILMVIGYLVCWLPYASVAWF). Residues 272 to 283 (IFTHKGSEFGPL) lie on the Extracellular side of the membrane. A helical transmembrane segment spans residues 284–305 (FMAVPSFFAKSSSIYNPIIYIC). The residue at position 293 (Lys-293) is an N6-(retinylidene)lysine. Residues 306-347 (MNKQFRQCMITTLFCGKNPFEGQEEDSSTKTEASSASSVSPA) lie on the Cytoplasmic side of the membrane. Cys-320 carries S-palmitoyl cysteine lipidation. Positions 326-347 (EGQEEDSSTKTEASSASSVSPA) are disordered. Low complexity predominate over residues 335–347 (KTEASSASSVSPA).

Belongs to the G-protein coupled receptor 1 family. Opsin subfamily. Phosphorylated on some or all of the serine and threonine residues present in the C-terminal region. Post-translationally, contains one covalently linked retinal chromophore.

The protein resides in the membrane. The protein localises to the cell projection. It localises to the cilium. It is found in the photoreceptor outer segment. Functionally, photoreceptor required for image-forming vision at low light intensity. While most salt water fish species use retinal as chromophore, most freshwater fish use 3-dehydroretinal, or a mixture of retinal and 3-dehydroretinal. Light-induced isomerization of 11-cis to all-trans retinal triggers a conformational change that activates signaling via G-proteins. Subsequent receptor phosphorylation mediates displacement of the bound G-protein alpha subunit by arrestin and terminates signaling. In Sargocentron spiniferum (Sabre squirrelfish), this protein is Rhodopsin (rho).